We begin with the raw amino-acid sequence, 241 residues long: Deoxynucleotide monophosphate kinase (241 aa).

Lys10 lines the dGMP pocket. ATP is bound by residues Arg11, Gly13, Asp15, and Thr16. DGMP is bound by residues Ile36 and Lys37. A Mg(2+)-binding site is contributed by Tyr42. Residue Arg68 coordinates dGMP. Positions 85 and 108 each coordinate Mg(2+). DGMP is bound by residues Arg132, Gly139, Thr140, Val144, Trp152, Asp175, Arg177, Gln178, Glu181, and Thr208.

Belongs to the dNMP kinase family. In terms of assembly, homodimer. Mg(2+) serves as cofactor.

The enzyme catalyses dTMP + ATP = dTDP + ADP. It catalyses the reaction dGMP + ATP = dGDP + ADP. It carries out the reaction 5-hydroxymethyl-dCMP + ATP = 5-hydroxymethyl-dCDP + ADP. With respect to regulation, inhibited by pyridoxal 5'-phosphate and diethylpyrocarbonate. Functionally, allows the synthesis of deoxyribonucleoside triphosphates necessary for the rapid viral DNA replication. Phosphorylates dGMP, dTMP and 5-hydroxymethyl-dCMP (hmdCMP) while excluding dCMP and dAMP. The phosphorylation of 5-hydroxymethyl-dCMP represents the first step in the replacement of cytosine by hydroxymethylcytosine in new viral DNA genomes. The protein is Deoxynucleotide monophosphate kinase (1) of Enterobacteria phage T4 (Bacteriophage T4).